We begin with the raw amino-acid sequence, 141 residues long: HTH-type transcriptional regulator ZntR (141 aa).

The region spanning 1-70 (MYRIGELAKM…LESIRELLSI (70 aa)) is the HTH merR-type domain. The segment at residues 4-23 (IGELAKMAEVTPDTIRYYEK) is a DNA-binding region (H-T-H motif). Residues Cys-114, Cys-115, His-119, and Cys-124 each contribute to the Zn(2+) site.

Homodimer.

Zinc-responsive transcriptional regulator of zntA. This Escherichia coli O157:H7 protein is HTH-type transcriptional regulator ZntR (zntR).